The primary structure comprises 230 residues: Phosphoribosylaminoimidazole-succinocarboxamide synthase (230 aa).

This sequence belongs to the SAICAR synthetase family.

The catalysed reaction is 5-amino-1-(5-phospho-D-ribosyl)imidazole-4-carboxylate + L-aspartate + ATP = (2S)-2-[5-amino-1-(5-phospho-beta-D-ribosyl)imidazole-4-carboxamido]succinate + ADP + phosphate + 2 H(+). The protein operates within purine metabolism; IMP biosynthesis via de novo pathway; 5-amino-1-(5-phospho-D-ribosyl)imidazole-4-carboxamide from 5-amino-1-(5-phospho-D-ribosyl)imidazole-4-carboxylate: step 1/2. The sequence is that of Phosphoribosylaminoimidazole-succinocarboxamide synthase (purC) from Thermotoga maritima (strain ATCC 43589 / DSM 3109 / JCM 10099 / NBRC 100826 / MSB8).